Here is a 586-residue protein sequence, read N- to C-terminus: Arrestin-related trafficking adapter 5 (586 aa).

Disordered stretches follow at residues 123 to 145 (GENA…DMDT) and 182 to 217 (ENGV…YSNR). Positions 126–145 (AENQHNSSSGRSTSNQDMDT) are enriched in polar residues. Positions 199-216 (SRSSSSNTLNNNSHSYSN) are enriched in low complexity. A Glycyl lysine isopeptide (Lys-Gly) (interchain with G-Cter in ubiquitin) cross-link involves residue Lys364.

This sequence belongs to the arrestin family. In terms of assembly, interacts with RSP5. Ubiquitinated by RSP5.

Its function is as follows. May regulate endocytosis by recruiting RSP5 ubiquitin ligase activity to specific plasma membrane proteins in response to extracellular stimuli. In Saccharomyces cerevisiae (strain ATCC 204508 / S288c) (Baker's yeast), this protein is Arrestin-related trafficking adapter 5 (ART5).